The sequence spans 487 residues: Glycogen synthase (487 aa).

Lys-15 serves as a coordination point for ADP-alpha-D-glucose.

Belongs to the glycosyltransferase 1 family. Bacterial/plant glycogen synthase subfamily.

It carries out the reaction [(1-&gt;4)-alpha-D-glucosyl](n) + ADP-alpha-D-glucose = [(1-&gt;4)-alpha-D-glucosyl](n+1) + ADP + H(+). Its pathway is glycan biosynthesis; glycogen biosynthesis. In terms of biological role, synthesizes alpha-1,4-glucan chains using ADP-glucose. The polypeptide is Glycogen synthase (Leptothrix cholodnii (strain ATCC 51168 / LMG 8142 / SP-6) (Leptothrix discophora (strain SP-6))).